Reading from the N-terminus, the 181-residue chain is Small ribosomal subunit protein uS4 (181 aa).

An S4 RNA-binding domain is found at 108–177; that stretch reads RRLQTMVYRQ…EGHPEIERIN (70 aa). The interval 161–181 is disordered; sequence GTSPLTSEGHPEIERINKKRR. A compositionally biased stretch (basic and acidic residues) spans 169-181; the sequence is GHPEIERINKKRR.

The protein belongs to the universal ribosomal protein uS4 family. As to quaternary structure, part of the 30S ribosomal subunit. Contacts protein S5. The interaction surface between S4 and S5 is involved in control of translational fidelity.

Its function is as follows. One of the primary rRNA binding proteins, it binds directly to 16S rRNA where it nucleates assembly of the body of the 30S subunit. In terms of biological role, with S5 and S12 plays an important role in translational accuracy. This is Small ribosomal subunit protein uS4 from Methanosphaerula palustris (strain ATCC BAA-1556 / DSM 19958 / E1-9c).